Here is a 469-residue protein sequence, read N- to C-terminus: Alpha,alpha-trehalose-phosphate synthase [UDP-forming] (469 aa).

D-glucose 6-phosphate is bound by residues Tyr-87 and Asp-141. Residues Arg-279 and Lys-284 each contribute to the UDP site. UDP-alpha-D-glucose-binding residues include Arg-279 and Lys-284. Arg-317 is a binding site for D-glucose 6-phosphate. 378–386 (DGMNLVSYE) contacts UDP-alpha-D-glucose. 382-386 (LVSYE) contributes to the UDP binding site.

This sequence belongs to the glycosyltransferase 20 family.

The catalysed reaction is D-glucose 6-phosphate + UDP-alpha-D-glucose = alpha,alpha-trehalose 6-phosphate + UDP + H(+). The protein operates within carbohydrate biosynthesis. In terms of biological role, synthase catalytic subunit of the trehalose synthase complex that catalyzes the production of trehalose from glucose-6-phosphate and UDP-alpha-D-glucose in a two step process. The disaccharide trehalose serves as a storage carbohydrate that is mobilized during spore germination. In Yarrowia lipolytica (strain CLIB 122 / E 150) (Yeast), this protein is Alpha,alpha-trehalose-phosphate synthase [UDP-forming].